Reading from the N-terminus, the 201-residue chain is MLTVVGMGPAGRHLMTPAALEAIDHADALAGGKRHLAQFPAFGGERFTLGADIGALLSWIAARRDKGIVVLASGDPLFYGIGTRLVAHFGIEQVRIIPGISAVQYLCAQAGIDMNDMWLTSSHGRCVSFEQLANHRKVAMVTDARCGPREIARELVARGKGHRLMVIGENLAMENERIHWLPVSAVNADYEMNAVVILDER.

It belongs to the precorrin methyltransferase family.

The catalysed reaction is Co-precorrin-7 + S-adenosyl-L-methionine = Co-precorrin-8X + S-adenosyl-L-homocysteine + H(+). It functions in the pathway cofactor biosynthesis; adenosylcobalamin biosynthesis; cob(II)yrinate a,c-diamide from sirohydrochlorin (anaerobic route): step 8/10. In terms of biological role, catalyzes the methylation of C-5 in cobalt-precorrin-7 to form cobalt-precorrin-8. This is Cobalt-precorrin-7 C(5)-methyltransferase (cbiE) from Salmonella typhi.